The sequence spans 502 residues: Glycogen synthase (502 aa).

Lys24 lines the ADP-alpha-D-glucose pocket.

This sequence belongs to the glycosyltransferase 1 family. Bacterial/plant glycogen synthase subfamily.

It catalyses the reaction [(1-&gt;4)-alpha-D-glucosyl](n) + ADP-alpha-D-glucose = [(1-&gt;4)-alpha-D-glucosyl](n+1) + ADP + H(+). The protein operates within glycan biosynthesis; glycogen biosynthesis. Synthesizes alpha-1,4-glucan chains using ADP-glucose. This Nitrosomonas eutropha (strain DSM 101675 / C91 / Nm57) protein is Glycogen synthase.